The chain runs to 162 residues: MDQQPPVQPQQRPPPSLTNPRFTLELEFVSSLANPYYLSHLAVTYPNLLGISKSSDDSNTSTEGPDPEAQAFAAYLAYLYSYWKTPEYAQFLTHPGATLRALRLLQEESFRRDIIRPQVIEALAGNGLENVQGGQNVEAGDTGHNEGDQGTQQDKENIALKT.

Residues valine 131–threonine 162 are disordered. Over residues aspartate 141–threonine 162 the composition is skewed to basic and acidic residues.

It belongs to the Mediator complex subunit 31 family. Component of the Mediator complex.

The protein localises to the nucleus. In terms of biological role, component of the Mediator complex, a coactivator involved in the regulated transcription of nearly all RNA polymerase II-dependent genes. Mediator functions as a bridge to convey information from gene-specific regulatory proteins to the basal RNA polymerase II transcription machinery. Mediator is recruited to promoters by direct interactions with regulatory proteins and serves as a scaffold for the assembly of a functional preinitiation complex with RNA polymerase II and the general transcription factors. The polypeptide is Mediator of RNA polymerase II transcription subunit 31 (soh1) (Aspergillus fumigatus (strain ATCC MYA-4609 / CBS 101355 / FGSC A1100 / Af293) (Neosartorya fumigata)).